Reading from the N-terminus, the 226-residue chain is MSNRIFQRGDPIGHAFADPDLLAQALRHRSAGTPHNERLEFLGDGIVNLLVAEALYQRWPKADEGALTRARAELVREGALAVIGRTLNLGERLTLGPGELKSGGHRRDSILADAVEAIVAAIYLDCGFERCRAVVLPWFEASLAALPVGKAEKDPKTRLQEWLQARQLPLPNYALISESGDEHAKQFHVACILEQPVARAEGQGTSRRLAEQQAATLVIAQLDSRM.

The 123-residue stretch at 5-127 (IFQRGDPIGH…IVAAIYLDCG (123 aa)) folds into the RNase III domain. Glu40 contacts Mg(2+). The active site involves Asp44. Positions 113 and 116 each coordinate Mg(2+). The active site involves Glu116. One can recognise a DRBM domain in the interval 154 to 224 (DPKTRLQEWL…ATLVIAQLDS (71 aa)).

Belongs to the ribonuclease III family. In terms of assembly, homodimer. It depends on Mg(2+) as a cofactor.

The protein localises to the cytoplasm. The catalysed reaction is Endonucleolytic cleavage to 5'-phosphomonoester.. Its function is as follows. Digests double-stranded RNA. Involved in the processing of primary rRNA transcript to yield the immediate precursors to the large and small rRNAs (23S and 16S). Processes some mRNAs, and tRNAs when they are encoded in the rRNA operon. Processes pre-crRNA and tracrRNA of type II CRISPR loci if present in the organism. This chain is Ribonuclease 3, found in Xanthomonas oryzae pv. oryzae (strain KACC10331 / KXO85).